The sequence spans 431 residues: Asparagine--tRNA ligase 1 (431 aa).

This sequence belongs to the class-II aminoacyl-tRNA synthetase family. Homodimer.

Its subcellular location is the cytoplasm. The enzyme catalyses tRNA(Asn) + L-asparagine + ATP = L-asparaginyl-tRNA(Asn) + AMP + diphosphate + H(+). The chain is Asparagine--tRNA ligase 1 (asnS1) from Lactiplantibacillus plantarum (strain ATCC BAA-793 / NCIMB 8826 / WCFS1) (Lactobacillus plantarum).